The chain runs to 72 residues: UPF0154 protein EF_1734 (72 aa).

The helical transmembrane segment at 4–26 (GWVVLIAVIALLVGAAGGFFLAR) threads the bilayer.

The protein belongs to the UPF0154 family.

The protein resides in the membrane. The polypeptide is UPF0154 protein EF_1734 (Enterococcus faecalis (strain ATCC 700802 / V583)).